The following is a 571-amino-acid chain: Alpha-1D adrenergic receptor (571 aa).

The Extracellular segment spans residues 1–94 (MTFRDLLSVN…AVGGLVVSAQ (94 aa)). A disordered region spans residues 13–75 (GSRSDGSAGG…SSAGEPGAAG (63 aa)). The span at 19–34 (SAGGASAGGSGGGSGG) shows a compositional bias: gly residues. A compositionally biased stretch (low complexity) spans 35-47 (AAASEGRAVDGVP). Residues 48–57 (GTAGSGGVVG) are compositionally biased toward gly residues. Residues Asn-64 and Asn-81 are each glycosylated (N-linked (GlcNAc...) asparagine). A helical transmembrane segment spans residues 95 to 120 (GVGVGVFLAAFILMAVAGNLLVILSV). The Cytoplasmic segment spans residues 121 to 132 (ACNRHLQTVTNY). The chain crosses the membrane as a helical span at residues 133–158 (FIVNLAVADLLLSATVLPFSATMEVL). Over 159 to 168 (GFWAFGRAFC) the chain is Extracellular. The helical transmembrane segment at 169-191 (DVWAAVDVLCCTASILSLCTISV) threads the bilayer. The Cytoplasmic portion of the chain corresponds to 192 to 212 (DRYVGVRHSLKYPSIMTERKA). Residues 213 to 237 (AAILALLWAVAIVVSVGPLLGWKEP) traverse the membrane as a helical segment. Residues 238–250 (VPPDERFCGITEE) are Extracellular-facing. The helical transmembrane segment at 251–274 (AGYAVFSSLCSFYLPMAVIVVMYC) threads the bilayer. The Cytoplasmic segment spans residues 275–348 (RVYVVARSTT…KFSREKKAAK (74 aa)). A helical membrane pass occupies residues 349 to 373 (TLAIVVGVFVLCWFPFFFVLPLGSL). Residues 374-380 (FPQLKPS) lie on the Extracellular side of the membrane. Residues 381 to 405 (EGVFKVIFWLGYFNSCVNPLIYPCS) traverse the membrane as a helical segment. Residues 406–571 (SREFKRAFLR…DYSHLRETDI (166 aa)) are Cytoplasmic-facing. The S-palmitoyl cysteine moiety is linked to residue Cys-419. A disordered region spans residues 465–487 (LPAPEATDTPSAPEAQAPVVGRR).

This sequence belongs to the G-protein coupled receptor 1 family. Adrenergic receptor subfamily. ADRA1D sub-subfamily. In terms of assembly, interacts with FLNA (via filamin repeat 21); increases PKA-mediated phosphorylation of FLNA. Palmitoylated. Palmitoylation by ZDHHC21 may increase the expression of the receptor and regulate downstream signaling.

It is found in the cell membrane. In terms of biological role, this alpha-adrenergic receptor mediates its effect through the influx of extracellular calcium. This Sus scrofa (Pig) protein is Alpha-1D adrenergic receptor (ADRA1D).